Here is a 311-residue protein sequence, read N- to C-terminus: tRNA-cytidine(32) 2-sulfurtransferase (311 aa).

Positions 47–52 match the PP-loop motif motif; that stretch reads SGGKDS. Residues Cys-122, Cys-125, and Cys-213 each coordinate [4Fe-4S] cluster.

The protein belongs to the TtcA family. Homodimer. Mg(2+) serves as cofactor. Requires [4Fe-4S] cluster as cofactor.

The protein localises to the cytoplasm. It catalyses the reaction cytidine(32) in tRNA + S-sulfanyl-L-cysteinyl-[cysteine desulfurase] + AH2 + ATP = 2-thiocytidine(32) in tRNA + L-cysteinyl-[cysteine desulfurase] + A + AMP + diphosphate + H(+). The protein operates within tRNA modification. Its function is as follows. Catalyzes the ATP-dependent 2-thiolation of cytidine in position 32 of tRNA, to form 2-thiocytidine (s(2)C32). The sulfur atoms are provided by the cysteine/cysteine desulfurase (IscS) system. This Escherichia coli (strain K12 / MC4100 / BW2952) protein is tRNA-cytidine(32) 2-sulfurtransferase.